The primary structure comprises 483 residues: Bromoperoxidase-catalase (483 aa).

The segment at 1-24 (MTQGPLTTEAGAPVADNQNSETAG) is disordered. Residues His54 and Asn127 contribute to the active site. Tyr337 is a heme binding site.

Belongs to the catalase family.

It carries out the reaction 2 H2O2 = O2 + 2 H2O. This Streptomyces venezuelae (strain ATCC 10712 / CBS 650.69 / DSM 40230 / JCM 4526 / NBRC 13096 / PD 04745) protein is Bromoperoxidase-catalase (bca).